A 105-amino-acid chain; its full sequence is Mini zinc finger protein 1 (105 aa).

Residues 1 to 29 are disordered; sequence MGPQQDRSAAKPYANGSTAAAAAAGRKEN. Residues 35–84 form a ZF-HD dimerization-type; degenerate zinc finger; it reads YRECQRNHAASIGGHAVDGCREFMASGAEGTAAALLCAACGCHRSFHRRE.

In terms of assembly, homo- and heterodimers.

It is found in the cytoplasm. In terms of biological role, inhibits zinc finger homeodomain (ZHD) transcription factors, by interacting with them to prevent both their nuclear localization and their DNA-binding properties. The chain is Mini zinc finger protein 1 (MIF1) from Oryza sativa subsp. indica (Rice).